The chain runs to 479 residues: GTPase Der (479 aa).

EngA-type G domains lie at 3 to 167 (FKVA…GEAR) and 208 to 383 (MRIA…KVWN). GTP contacts are provided by residues 9 to 16 (GRPNVGKS), 56 to 60 (DTAGF), 119 to 122 (NKAE), 214 to 221 (GRPNAGKS), 261 to 265 (DTAGM), and 326 to 329 (NKWD). Residues 384–468 (SRVSTGKLNR…PIRIALRTSD (85 aa)) form the KH-like domain.

The protein belongs to the TRAFAC class TrmE-Era-EngA-EngB-Septin-like GTPase superfamily. EngA (Der) GTPase family. In terms of assembly, associates with the 50S ribosomal subunit.

Functionally, GTPase that plays an essential role in the late steps of ribosome biogenesis. This Mesorhizobium japonicum (strain LMG 29417 / CECT 9101 / MAFF 303099) (Mesorhizobium loti (strain MAFF 303099)) protein is GTPase Der.